We begin with the raw amino-acid sequence, 468 residues long: Nicotinamide phosphoribosyltransferase (468 aa).

Residue arginine 180 coordinates diphosphate. Aspartate 203 is a binding site for beta-nicotinamide D-ribonucleotide. Diphosphate contacts are provided by histidine 229 and arginine 293. Histidine 229 is subject to Phosphohistidine; by autocatalysis. The beta-nicotinamide D-ribonucleotide site is built by aspartate 335 and arginine 373.

Belongs to the NAPRTase family. In terms of assembly, homodimer. The dimeric structure consists of two protomers arranged head to tail, with domain A on one protomer interacting with domain B on the other protomer. In terms of processing, phosphorylation at His-229 plays a crucial role in enhancing the substrate affinity and is important for maintaining enzymatic activity.

The enzyme catalyses beta-nicotinamide D-ribonucleotide + diphosphate = 5-phospho-alpha-D-ribose 1-diphosphate + nicotinamide + H(+). Its pathway is cofactor biosynthesis; NAD(+) biosynthesis; nicotinamide D-ribonucleotide from 5-phospho-alpha-D-ribose 1-diphosphate and nicotinamide: step 1/1. ATP-dependent autophosphorylation plays a vital role in nicotinamide binding and enzyme activation. Activity is inhibited by FK866. Functionally, catalyzes the condensation of nicotinamide with 5-phosphoribosyl-1-pyrophosphate to yield nicotinamide mononucleotide, an intermediate in the biosynthesis of NAD. Plays an important role in the biosynthesis of NAD via the nicotinamide (NAM) salvage pathway. Is also capable of hydrolyzing ATP and shows ATP-dependent autophosphorylation activity. The chain is Nicotinamide phosphoribosyltransferase from Xanthomonas campestris pv. campestris (strain 8004).